The following is a 163-amino-acid chain: Probable calcium-binding protein CML26 (163 aa).

N-acetylalanine is present on alanine 2. EF-hand domains are found at residues 16–51 (STDMELKKVFDKFDANGDGKISVSELGNVFKSMGTS), 52–82 (YTEEELNRVLDEIDIDCDGFINQEEFATICR), 85–120 (SSAVEIREAFDLYDQNKNGLISSSEIHKVLNRLGMT), and 121–156 (CSVEDCVRMIGHVDTDGDGNVNFEEFQKMMSSPELV). Residues aspartate 29, asparagine 31, aspartate 33, lysine 35, glutamate 40, aspartate 65, aspartate 67, aspartate 69, glutamate 76, aspartate 98, asparagine 100, asparagine 102, glutamate 109, aspartate 134, aspartate 136, aspartate 138, asparagine 140, and glutamate 145 each coordinate Ca(2+).

Potential calcium sensor. In Arabidopsis thaliana (Mouse-ear cress), this protein is Probable calcium-binding protein CML26 (CML26).